The sequence spans 209 residues: MDFYYLPGSAPCRAVQMTAAAVGVELNLKLTDLMKGEHMKPEFLKINPQHCIPTLVDNGFALWESRAICTYLAEKYGKDDKLYPKDPQKRAVVNQRMYFDMGTLYQRFADYYYPQIFAKQPANPENEQKMKDAVGFLNSFLDGHKYVAGDSLTIADLSILATISTYDVAGFDLAKYQHVAAWYENIRKEAPGAAINQAGIEEFKKYFEK.

The region spanning 1-80 is the GST N-terminal domain; it reads MDFYYLPGSA…YLAEKYGKDD (80 aa). Residues Ser-9, 50–52, and 64–66 each bind glutathione; these read HCI and ESR. In terms of domain architecture, GST C-terminal spans 86-207; sequence DPQKRAVVNQ…AGIEEFKKYF (122 aa).

This sequence belongs to the GST superfamily. Theta family. Homodimer.

It catalyses the reaction RX + glutathione = an S-substituted glutathione + a halide anion + H(+). The enzyme catalyses 1,1,1-trichloro-2,2-bis(4-chlorophenyl)ethane = 1,1-dichloro-2,2-bis(4-chlorophenyl)ethylene + chloride + H(+). In terms of biological role, conjugation of reduced glutathione to a wide number of exogenous and endogenous hydrophobic electrophiles. Has DDT dehydrochlorinase activity. The protein is Glutathione S-transferase 1, isoform C (GstD1) of Anopheles gambiae (African malaria mosquito).